Consider the following 188-residue polypeptide: Protein YOP1 (188 aa).

The Cytoplasmic portion of the chain corresponds to 1–35; the sequence is MAEIAGNLQRILQSLDRQFAGNKYLQEFERKTGFP. A helical membrane pass occupies residues 36 to 55; the sequence is KSYAIAGAGVAYLFIIFINV. Residues 56–57 lie on the Lumenal side of the membrane; sequence GG. Residues 58–78 traverse the membrane as a helical segment; sequence VGEILSNFLGFVLPCYYSLHA. Topologically, residues 79–88 are cytoplasmic; the sequence is IKTTTTADDT. Residues 89–105 traverse the membrane as a helical segment; sequence ELLTYWIVFAFFSVIEF. Over 106–108 the chain is Lumenal; the sequence is WSK. A helical membrane pass occupies residues 109-127; sequence AILYWVPFYWFFKTIFLIF. The Cytoplasmic portion of the chain corresponds to 128–188; it reads IALPQLGGAS…TGAASHQSSD (61 aa). The tract at residues 163-188 is disordered; it reads ISSKMEQAAKGASARATGAASHQSSD. The segment covering 170–188 has biased composition (low complexity); that stretch reads AAKGASARATGAASHQSSD.

Belongs to the DP1 family. As to quaternary structure, oligomer.

Its subcellular location is the endoplasmic reticulum membrane. The protein localises to the golgi apparatus membrane. Its function is as follows. Required to generate and maintain the structure of the tubular endoplasmic reticulum network and the vacuole. Induces high curvature in membranes and causes membrane tubule formation. Involved in membrane/vesicle trafficking. The chain is Protein YOP1 (YOP1) from Eremothecium gossypii (strain ATCC 10895 / CBS 109.51 / FGSC 9923 / NRRL Y-1056) (Yeast).